A 366-amino-acid polypeptide reads, in one-letter code: MAPSGSGGVRRRCRRVLYWIPVVFISLLLGWSYYAYAIQLCIVSMENIGEQVVCLMAYHLLFAMFVWSYWKTIFTLPMNPSKEFHLSYAEKELLEREPRGEAHQEVLRRAAKDLPIYTRTMSGAIRYCDRCQLIKPDRCHHCSVCDKCILKMDHHCPWVNNCVGFSNYKFFLLFLAYSLLYCLFIAATDLQYFIRFWTNGLPDTQAKFHIMFLFFAAAMFSVSLSSLFGYHCWLVSKNKSTLEAFRNPVFRHGTDKNGFSLGFSKNMRQVFGDEKKYWLLPVFSSQGDGCSFPTCLVNQDPEQPSTPAGLNSTVKNPENHQFPAKPLRESQSHLLKDSQTWTESSANPGKGKAGMSNPALTMENET.

The Cytoplasmic portion of the chain corresponds to 1–15; the sequence is MAPSGSGGVRRRCRR. A helical membrane pass occupies residues 16–36; that stretch reads VLYWIPVVFISLLLGWSYYAY. The Lumenal segment spans residues 37–47; that stretch reads AIQLCIVSMEN. Residues 48-68 form a helical membrane-spanning segment; the sequence is IGEQVVCLMAYHLLFAMFVWS. At 69-169 the chain is on the cytoplasmic side; that stretch reads YWKTIFTLPM…NNCVGFSNYK (101 aa). One can recognise a DHHC domain in the interval 126–176; sequence RYCDRCQLIKPDRCHHCSVCDKCILKMDHHCPWVNNCVGFSNYKFFLLFLA. The active-site S-palmitoyl cysteine intermediate is cysteine 156. A helical membrane pass occupies residues 170–190; the sequence is FFLLFLAYSLLYCLFIAATDL. Residues 191–207 lie on the Lumenal side of the membrane; the sequence is QYFIRFWTNGLPDTQAK. The chain crosses the membrane as a helical span at residues 208 to 228; sequence FHIMFLFFAAAMFSVSLSSLF. Topologically, residues 229–366 are cytoplasmic; sequence GYHCWLVSKN…NPALTMENET (138 aa). The segment covering 297–316 has biased composition (polar residues); sequence VNQDPEQPSTPAGLNSTVKN. Positions 297–366 are disordered; sequence VNQDPEQPST…NPALTMENET (70 aa). Residues 298–366 form a mediates localization to plasma membrane and recycling endosomes region; that stretch reads NQDPEQPSTP…NPALTMENET (69 aa). The span at 326–336 shows a compositional bias: basic and acidic residues; the sequence is PLRESQSHLLK. Residues 334 to 335 carry the Non-canonical dileucine endocytic signal motif; it reads LL. Positions 337–347 are enriched in polar residues; that stretch reads DSQTWTESSAN. The short motif at 357–360 is the NPxY-like endocytic signal element; it reads NPAL.

It belongs to the DHHC palmitoyltransferase family. As to quaternary structure, monomer. Homodimer. The monomeric form has a higher catalytic activity. In terms of processing, autopalmitoylated. Expressed in all brain regions.

It localises to the postsynaptic density. It is found in the postsynaptic recycling endosome membrane. The protein localises to the cell membrane. Its subcellular location is the endoplasmic reticulum membrane. The protein resides in the golgi apparatus membrane. It catalyses the reaction L-cysteinyl-[protein] + hexadecanoyl-CoA = S-hexadecanoyl-L-cysteinyl-[protein] + CoA. It carries out the reaction L-cysteinyl-[protein] + tetradecanoyl-CoA = S-tetradecanoyl-L-cysteinyl-[protein] + CoA. The enzyme catalyses L-cysteinyl-[protein] + octadecanoyl-CoA = S-octadecanoyl-L-cysteinyl-[protein] + CoA. Functionally, palmitoyltransferase that catalyzes the addition of palmitate onto various protein substrates and is involved in a variety of cellular processes. Has no stringent fatty acid selectivity and in addition to palmitate can also transfer onto target proteins myristate from tetradecanoyl-CoA and stearate from octadecanoyl-CoA. In the nervous system, plays a role in long term synaptic potentiation by palmitoylating AKAP5 through which it regulates protein trafficking from the dendritic recycling endosomes to the plasma membrane and controls both structural and functional plasticity at excitatory synapses. In dendrites, mediates the palmitoylation of DLG4 when synaptic activity decreases and induces synaptic clustering of DLG4 and associated AMPA-type glutamate receptors. Also mediates the de novo and turnover palmitoylation of RGS7BP, a shuttle for Gi/o-specific GTPase-activating proteins/GAPs, promoting its localization to the plasma membrane in response to the activation of G protein-coupled receptors. Through the localization of these GTPase-activating proteins/GAPs, it also probably plays a role in G protein-coupled receptors signaling in neurons. Also probably plays a role in cell adhesion by palmitoylating CD9 and CD151 to regulate their expression and function. Palmitoylates the endoplasmic reticulum protein CKAP4 and regulates its localization to the plasma membrane. Could also palmitoylate LCK and regulate its localization to the plasma membrane. The polypeptide is Palmitoyltransferase ZDHHC2 (Mus musculus (Mouse)).